The primary structure comprises 520 residues: Ubiquitin carboxyl-terminal hydrolase 3 (520 aa).

Residue Met-1 is modified to N-acetylmethionine. The segment at 1-121 (MECPHLSSSV…QKVREHLQNL (121 aa)) adopts a UBP-type zinc-finger fold. 12 residues coordinate Zn(2+): Cys-3, His-5, Cys-29, Cys-32, Cys-41, Cys-44, Cys-49, His-56, His-60, His-82, Cys-95, and Cys-98. The 353-residue stretch at 159–511 (TGLRNLGNTC…KAYILFYVER (353 aa)) folds into the USP domain. Residue Cys-168 is the Nucleophile of the active site. The Proton acceptor role is filled by His-471.

Belongs to the peptidase C19 family. USP3 subfamily. Interacts (via UBP-type domain) with H2A; the interaction is less efficient than with monoubiquitinated H2A.

The protein resides in the nucleus. It localises to the cytoplasm. The catalysed reaction is Thiol-dependent hydrolysis of ester, thioester, amide, peptide and isopeptide bonds formed by the C-terminal Gly of ubiquitin (a 76-residue protein attached to proteins as an intracellular targeting signal).. Functionally, deubiquitinase that plays a role in several cellular processes including transcriptional regulation, cell cycle progression or innate immunity. In response to DNA damage, deubiquitinates monoubiquitinated target proteins such as histone H2A and H2AX and thereby counteracts RNF168- and RNF8-mediated ubiquitination. In turn, participates in the recruitment of DNA damage repair factors to DNA break sites. Required for proper progression through S phase and subsequent mitotic entry. Acts as a positive regulator of TP53 by deubiquitinating and stabilizing it to promote normal cell proliferation and transformation. Participates in establishing tolerance innate immune memory through non-transcriptional feedback. Mechanistically, negatively regulates TLR-induced NF-kappa-B signaling by targeting and removing the 'Lys-63'-linked polyubiquitin chains on MYD88. Negatively regulates the activation of type I interferon signaling by mediating 'Lys-63'-linked polyubiquitin chains on RIGI and IFIH1. Also deubiquinates ASC/PYCARD, the central adapter mediating the assembly and activation of most inflammasomes, and thereby promotes inflammasome activation. The chain is Ubiquitin carboxyl-terminal hydrolase 3 (Usp3) from Mus musculus (Mouse).